The primary structure comprises 452 residues: AP-4 complex subunit mu-1 (452 aa).

The 268-residue stretch at 184 to 451 folds into the MHD domain; that stretch reads KNEVFLDVVE…LSHSDAYVIR (268 aa).

The protein belongs to the adaptor complexes medium subunit family. In terms of assembly, adaptor protein complex 4 (AP-4) is a heterotetramer composed of two large adaptins (epsilon-type subunit AP4E1 and beta-type subunit AP4B1), a medium adaptin (mu-type subunit AP4M1) and a small adaptin (sigma-type AP4S1). Interacts with tyrosine-based sorting signals on the cytoplasmic tail of cargo proteins such as APP, ATG9A, LAMP2 and NAGPA. Interacts with the C-terminal domain of GRID2. Interacts with GRIA1 and GRIA2; the interaction is indirect via CACNG3. Interacts with CACNG3; CACNG3 associates GRIA1 and GRIA2 with the adaptor protein complex 4 (AP-4) to target them to the somatodendritic compartment of neurons. Interacts with HOOK1 and HOOK2; the interactions are direct, mediate the interaction between FTS-Hook-FHIP (FHF) complex and AP-4 and the perinuclear distribution of AP-4.

It localises to the golgi apparatus. The protein localises to the trans-Golgi network membrane. Its subcellular location is the early endosome. In terms of biological role, component of the adaptor protein complex 4 (AP-4). Adaptor protein complexes are vesicle coat components involved both in vesicle formation and cargo selection. They control the vesicular transport of proteins in different trafficking pathways. AP-4 forms a non clathrin-associated coat on vesicles departing the trans-Golgi network (TGN) and may be involved in the targeting of proteins from the trans-Golgi network (TGN) to the endosomal-lysosomal system. It is also involved in protein sorting to the basolateral membrane in epithelial cells and the proper asymmetric localization of somatodendritic proteins in neurons. Within AP-4, the mu-type subunit AP4M1 is directly involved in the recognition and binding of tyrosine-based sorting signals found in the cytoplasmic part of cargos. The adaptor protein complex 4 (AP-4) may also recognize other types of sorting signal. The polypeptide is AP-4 complex subunit mu-1 (Bos taurus (Bovine)).